Reading from the N-terminus, the 321-residue chain is Ferredoxin--NADP reductase (321 aa).

FAD-binding residues include glutamate 33, glutamine 41, tyrosine 46, valine 86, leucine 119, aspartate 277, and serine 318.

It belongs to the ferredoxin--NADP reductase type 2 family. As to quaternary structure, homodimer. FAD serves as cofactor.

The catalysed reaction is 2 reduced [2Fe-2S]-[ferredoxin] + NADP(+) + H(+) = 2 oxidized [2Fe-2S]-[ferredoxin] + NADPH. This is Ferredoxin--NADP reductase from Lactococcus lactis subsp. cremoris (strain MG1363).